The following is a 253-amino-acid chain: MAACWVHYLLLLLLGVSHQTLAQSLQCAVSKVLRLEDDPSRTFNWTSKPDKVETCNPGELCQETVLLIKAEGTKTAVVASKGCASREIEAVTFIQYTPPPGVIAISYSNYCNSSLCNNSKNVSLFWKPPDTTATSKILGALSCPTCVALGSCSSAPSMPCANSTTQCYQGKIELSGGGMDSVLHIKGCTTAIGCRLMAAITSVGPMTVKETCSYHSLLQPRKAEESRASGRSTSLWVLELLLPAVLVALTHFP.

The first 24 residues, 1–24 (MAACWVHYLLLLLLGVSHQTLAQS), serve as a signal peptide directing secretion. N-linked (GlcNAc...) asparagine glycans are attached at residues asparagine 44, asparagine 112, asparagine 117, asparagine 121, and asparagine 162. Residues 53-117 (ETCNPGELCQ…SNYCNSSLCN (65 aa)) form the UPAR/Ly6 1 domain. Positions 143–218 (CPTCVALGSC…KETCSYHSLL (76 aa)) constitute a UPAR/Ly6 2 domain. Serine 226 carries GPI-anchor amidated serine lipidation. Residues 227–253 (RASGRSTSLWVLELLLPAVLVALTHFP) constitute a propeptide, removed in mature form.

Interacts with VAMP3. Interacts with LY6K. Interacts with DPEP3; co-localized on the cell surface of spermatocytes, spermatids, and testicular spermatozoa, co-localized only in cytoplasmic droplets of caput and corpus epididymal sperm. Interacts with ADAM5. In terms of processing, N-glycosylated; by high mannose and/or biantennary complex and/or certain types of hybrid oligosaccharides; possesses different oligosaccharides chains according to its subcellular localization in the testis. Sheds from membrane raft by ACE and released from the cell surface of epididymal sperm while it passes through the caput epididymis leading to disappearance of TEX101 on spermatozoa; is essential to produce fertile spermatozoa.

Its subcellular location is the cell membrane. It localises to the membrane raft. The protein resides in the cytoplasmic vesicle. The protein localises to the secretory vesicle. It is found in the acrosome. Its subcellular location is the secreted. Its function is as follows. Plays a role in fertilization by controlling binding of sperm to zona pellucida and migration of spermatozoa into the oviduct. May play a role in signal transduction and promote protein tyrosine phosphorylation. In Cricetulus griseus (Chinese hamster), this protein is Testis-expressed protein 101.